The chain runs to 664 residues: Pentatricopeptide repeat-containing protein At1g10910, chloroplastic (664 aa).

The N-terminal 72 residues, 1–72 (METPLLVGLE…KRHSNSYLAR (72 aa)), are a transit peptide targeting the chloroplast. PPR repeat units follow at residues 165–199 (NVYI…GLKP), 200–235 (DVVT…GIQM), 236–270 (DSVM…GHSP), 271–305 (NIYH…GLVP), 306–340 (NKVM…GYAE), 341–375 (NEMP…GVRS), 376–406 (DGYA…SETT), 411–445 (DLVM…AVSP), and 446–480 (DYNT…GHRL).

It belongs to the PPR family. P subfamily.

Its subcellular location is the plastid. It localises to the chloroplast. In Arabidopsis thaliana (Mouse-ear cress), this protein is Pentatricopeptide repeat-containing protein At1g10910, chloroplastic.